Here is a 197-residue protein sequence, read N- to C-terminus: ATP-dependent Clp protease proteolytic subunit (197 aa).

The active-site Nucleophile is S98. H123 is a catalytic residue.

The protein belongs to the peptidase S14 family. In terms of assembly, fourteen ClpP subunits assemble into 2 heptameric rings which stack back to back to give a disk-like structure with a central cavity, resembling the structure of eukaryotic proteasomes.

It is found in the cytoplasm. It carries out the reaction Hydrolysis of proteins to small peptides in the presence of ATP and magnesium. alpha-casein is the usual test substrate. In the absence of ATP, only oligopeptides shorter than five residues are hydrolyzed (such as succinyl-Leu-Tyr-|-NHMec, and Leu-Tyr-Leu-|-Tyr-Trp, in which cleavage of the -Tyr-|-Leu- and -Tyr-|-Trp bonds also occurs).. Functionally, cleaves peptides in various proteins in a process that requires ATP hydrolysis. Has a chymotrypsin-like activity. Plays a major role in the degradation of misfolded proteins. This Pediococcus pentosaceus (strain ATCC 25745 / CCUG 21536 / LMG 10740 / 183-1w) protein is ATP-dependent Clp protease proteolytic subunit.